Consider the following 119-residue polypeptide: Large ribosomal subunit protein uL24 (119 aa).

Belongs to the universal ribosomal protein uL24 family. Part of the 50S ribosomal subunit.

One of two assembly initiator proteins, it binds directly to the 5'-end of the 23S rRNA, where it nucleates assembly of the 50S subunit. In terms of biological role, located at the polypeptide exit tunnel on the outside of the subunit. The sequence is that of Large ribosomal subunit protein uL24 from Saccharolobus solfataricus (strain ATCC 35092 / DSM 1617 / JCM 11322 / P2) (Sulfolobus solfataricus).